The sequence spans 109 residues: Small ribosomal subunit protein bS20 (109 aa).

Residues 1–26 (MANIKSAKKRAIQSEKRRKHNASRRS) are disordered.

It belongs to the bacterial ribosomal protein bS20 family.

Its function is as follows. Binds directly to 16S ribosomal RNA. This Hamiltonella defensa subsp. Acyrthosiphon pisum (strain 5AT) protein is Small ribosomal subunit protein bS20.